The chain runs to 354 residues: Selenide, water dikinase (354 aa).

C23 is a catalytic residue. ATP is bound by residues K26 and T54–D56. D57 provides a ligand contact to Mg(2+). Residues D74, D97, and G145–S147 each bind ATP. Position 97 (D97) interacts with Mg(2+). D233 serves as a coordination point for Mg(2+).

The protein belongs to the selenophosphate synthase 1 family. Class I subfamily. Homodimer. It depends on Mg(2+) as a cofactor.

The catalysed reaction is hydrogenselenide + ATP + H2O = selenophosphate + AMP + phosphate + 2 H(+). Synthesizes selenophosphate from selenide and ATP. The polypeptide is Selenide, water dikinase (Paraburkholderia xenovorans (strain LB400)).